The primary structure comprises 128 residues: SH2 domain-containing protein 1A (128 aa).

One can recognise an SH2 domain in the interval 6–102; sequence VYHGKISRET…GIVIPLQYPV (97 aa). The tract at residues 67-92 is interaction with FYN SH3 domain; it reads ETAPGVHKRYFRKIKNLISAFQKPDQ. N6-acetyllysine is present on K89. The tract at residues 106–128 is disordered; the sequence is SSARSTQGTTGIREDPDVCLKAP. A compositionally biased stretch (basic and acidic residues) spans 117–128; that stretch reads IREDPDVCLKAP.

As to quaternary structure, interacts with CD84, CD244, LY9, SLAMF1 and FYN. Interacts with NTRK1, NTRK2 and NTRK3.

Its subcellular location is the cytoplasm. Functionally, cytoplasmic adapter regulating receptors of the signaling lymphocytic activation molecule (SLAM) family such as SLAMF1, CD244, LY9, CD84, SLAMF6 and SLAMF7. In SLAM signaling seems to cooperate with SH2D1B/EAT-2. Initially it has been proposed that association with SLAMF1 prevents SLAMF1 binding to inhibitory effectors including INPP5D/SHIP1 and PTPN11/SHP-2. However, by simultaneous interactions, recruits FYN which subsequently phosphorylates and activates SLAMF1. Positively regulates CD244/2B4- and CD84-mediated natural killer (NK) cell functions. Can also promote CD48-, SLAMF6 -, LY9-, and SLAMF7-mediated NK cell activation. In the context of NK cell-mediated cytotoxicity enhances conjugate formation with target cells. May also regulate the activity of the neurotrophin receptors NTRK1, NTRK2 and NTRK3. The polypeptide is SH2 domain-containing protein 1A (SH2D1A) (Macaca mulatta (Rhesus macaque)).